Consider the following 432-residue polypeptide: Adenylosuccinate synthetase (432 aa).

GTP-binding positions include 13–19 and 41–43; these read GDEGKGK and GHT. Residue D14 is the Proton acceptor of the active site. Residues D14 and G41 each contribute to the Mg(2+) site. IMP contacts are provided by residues 14–17, 39–42, T130, R144, Q225, T240, and R304; these read DEGK and NAGH. H42 serves as the catalytic Proton donor. 300-306 is a binding site for substrate; the sequence is ATTGRRR. GTP-binding positions include R306, 332-334, and 415-417; these read KLD and STG.

It belongs to the adenylosuccinate synthetase family. Homodimer. The cofactor is Mg(2+).

It is found in the cytoplasm. It carries out the reaction IMP + L-aspartate + GTP = N(6)-(1,2-dicarboxyethyl)-AMP + GDP + phosphate + 2 H(+). It participates in purine metabolism; AMP biosynthesis via de novo pathway; AMP from IMP: step 1/2. Its function is as follows. Plays an important role in the de novo pathway of purine nucleotide biosynthesis. Catalyzes the first committed step in the biosynthesis of AMP from IMP. The chain is Adenylosuccinate synthetase from Serratia proteamaculans (strain 568).